Here is a 145-residue protein sequence, read N- to C-terminus: Internal scaffolding protein VP3 (145 aa).

It belongs to the microviridae B protein family.

It localises to the host cytoplasm. Functionally, participates in the assembly of the viral procapsid in the cytoplasm. Released from the procapsid upon genome packaging, possibly through affinity displacement by the protein ORF8, or by proteolysis. The protein is Internal scaffolding protein VP3 of Chlamydia phage 1 (Bacteriophage Chp1).